The chain runs to 95 residues: Large ribosomal subunit protein eL30 (95 aa).

The protein belongs to the eukaryotic ribosomal protein eL30 family.

This is Large ribosomal subunit protein eL30 from Methanospirillum hungatei JF-1 (strain ATCC 27890 / DSM 864 / NBRC 100397 / JF-1).